We begin with the raw amino-acid sequence, 716 residues long: Fatty acid oxidation complex subunit alpha (716 aa).

The segment at 1–189 (MIYQSPTIQV…KVGAIDAVVA (189 aa)) is enoyl-CoA hydratase/isomerase. Asp-296 provides a ligand contact to substrate. The tract at residues 311–716 (KNIDTAAVLG…AANNGSYYQS (406 aa)) is 3-hydroxyacyl-CoA dehydrogenase. NAD(+) contacts are provided by residues Met-324, Asp-343, 400 to 402 (VVE), Lys-407, and Ser-429. His-450 acts as the For 3-hydroxyacyl-CoA dehydrogenase activity in catalysis. Position 453 (Asn-453) interacts with NAD(+). Asn-500 contacts substrate.

The protein in the N-terminal section; belongs to the enoyl-CoA hydratase/isomerase family. In the C-terminal section; belongs to the 3-hydroxyacyl-CoA dehydrogenase family. As to quaternary structure, heterotetramer of two alpha chains (FadB) and two beta chains (FadA).

The enzyme catalyses a (3S)-3-hydroxyacyl-CoA + NAD(+) = a 3-oxoacyl-CoA + NADH + H(+). It catalyses the reaction a (3S)-3-hydroxyacyl-CoA = a (2E)-enoyl-CoA + H2O. It carries out the reaction a 4-saturated-(3S)-3-hydroxyacyl-CoA = a (3E)-enoyl-CoA + H2O. The catalysed reaction is (3S)-3-hydroxybutanoyl-CoA = (3R)-3-hydroxybutanoyl-CoA. The enzyme catalyses a (3Z)-enoyl-CoA = a 4-saturated (2E)-enoyl-CoA. It catalyses the reaction a (3E)-enoyl-CoA = a 4-saturated (2E)-enoyl-CoA. It participates in lipid metabolism; fatty acid beta-oxidation. Its function is as follows. Involved in the aerobic and anaerobic degradation of long-chain fatty acids via beta-oxidation cycle. Catalyzes the formation of 3-oxoacyl-CoA from enoyl-CoA via L-3-hydroxyacyl-CoA. It can also use D-3-hydroxyacyl-CoA and cis-3-enoyl-CoA as substrate. The polypeptide is Fatty acid oxidation complex subunit alpha (Shewanella sediminis (strain HAW-EB3)).